A 340-amino-acid polypeptide reads, in one-letter code: Ketol-acid reductoisomerase (NADP(+)) (340 aa).

The 182-residue stretch at 1 to 182 (MRVYYDRDCD…GGGRSGIIET (182 aa)) folds into the KARI N-terminal Rossmann domain. Residues 24-27 (YGSQ), R48, S51, S53, and 83-86 (DELQ) each bind NADP(+). H108 is an active-site residue. An NADP(+)-binding site is contributed by G134. One can recognise a KARI C-terminal knotted domain in the interval 183–329 (NFREECETDL…ETLRGMMPWI (147 aa)). Mg(2+) is bound by residues D191, E195, E227, and E231. S252 provides a ligand contact to substrate.

It belongs to the ketol-acid reductoisomerase family. Mg(2+) serves as cofactor.

It catalyses the reaction (2R)-2,3-dihydroxy-3-methylbutanoate + NADP(+) = (2S)-2-acetolactate + NADPH + H(+). The enzyme catalyses (2R,3R)-2,3-dihydroxy-3-methylpentanoate + NADP(+) = (S)-2-ethyl-2-hydroxy-3-oxobutanoate + NADPH + H(+). Its pathway is amino-acid biosynthesis; L-isoleucine biosynthesis; L-isoleucine from 2-oxobutanoate: step 2/4. It participates in amino-acid biosynthesis; L-valine biosynthesis; L-valine from pyruvate: step 2/4. Involved in the biosynthesis of branched-chain amino acids (BCAA). Catalyzes an alkyl-migration followed by a ketol-acid reduction of (S)-2-acetolactate (S2AL) to yield (R)-2,3-dihydroxy-isovalerate. In the isomerase reaction, S2AL is rearranged via a Mg-dependent methyl migration to produce 3-hydroxy-3-methyl-2-ketobutyrate (HMKB). In the reductase reaction, this 2-ketoacid undergoes a metal-dependent reduction by NADPH to yield (R)-2,3-dihydroxy-isovalerate. In Jannaschia sp. (strain CCS1), this protein is Ketol-acid reductoisomerase (NADP(+)).